The sequence spans 335 residues: Phenylalanine--tRNA ligase alpha subunit (335 aa).

E262 lines the Mg(2+) pocket.

Belongs to the class-II aminoacyl-tRNA synthetase family. Phe-tRNA synthetase alpha subunit type 1 subfamily. As to quaternary structure, tetramer of two alpha and two beta subunits. The cofactor is Mg(2+).

Its subcellular location is the cytoplasm. It catalyses the reaction tRNA(Phe) + L-phenylalanine + ATP = L-phenylalanyl-tRNA(Phe) + AMP + diphosphate + H(+). The sequence is that of Phenylalanine--tRNA ligase alpha subunit from Prochlorococcus marinus subsp. pastoris (strain CCMP1986 / NIES-2087 / MED4).